The chain runs to 221 residues: Protein myomaker (221 aa).

At 1–3 (MGT) the chain is on the extracellular side. A helical membrane pass occupies residues 4-24 (VVAKLLLPTLSSLAFLPTVSI). At 25-29 (ATKRR) the chain is on the cytoplasmic side. The helical transmembrane segment at 30–50 (FYMEAMVYLFTMFFVAFSHAC) threads the bilayer. Residues 51 to 64 (DGPGLSVLCFMRRD) lie on the Extracellular side of the membrane. A helical transmembrane segment spans residues 65-85 (ILEYFSIYGTALSMWVSLMAL). Over 86 to 93 (ADFDEPQR) the chain is Cytoplasmic. Residues 94 to 110 (STFTMLGVLTIAVRTFH) traverse the membrane as a helical segment. At 111-113 (DRW) the chain is on the extracellular side. Residues 114 to 134 (GYGVYSGPIGTATLIIAVKWL) traverse the membrane as a helical segment. Residues 135 to 153 (KKMKEKKGLYPDKSIYTQQ) are Cytoplasmic-facing. The chain crosses the membrane as a helical span at residues 154–174 (IGPGLCFGALALMLRFFFEEW). Position 175 (Asp175) is a topological domain, extracellular. The helical transmembrane segment at 176–196 (YTYVHSFYHCALAMSFVLLLP) threads the bilayer. The Cytoplasmic portion of the chain corresponds to 197–221 (KVNKKAGNAGAPAKLTFSTLCCTCV). S-palmitoyl cysteine attachment occurs at residues Cys217 and Cys218.

It belongs to the TMEM8 family. In terms of assembly, interacts with MYMX. In terms of processing, palmitoylated at the C-terminus; palmitoylation promotes localization to the Golgi apparatus. In terms of tissue distribution, specifically expressed in skeletal muscle during embryogenesis and adult muscle regeneration.

It is found in the cell membrane. The protein resides in the golgi apparatus membrane. Its function is as follows. Myoblast-specific protein that mediates myoblast fusion, an essential step for the formation of multi-nucleated muscle fibers. Actively participates in the membrane fusion reaction by mediating the mixing of cell membrane lipids (hemifusion) upstream of MYMX. Acts independently of MYMX. Involved in skeletal muscle regeneration in response to injury by mediating the fusion of satellite cells, a population of muscle stem cells, with injured myofibers. Also involved in skeletal muscle hypertrophy, probably by mediating the fusion of satellite cells with myofibers. The protein is Protein myomaker of Mus musculus (Mouse).